A 68-amino-acid chain; its full sequence is Riparin-1.6 (68 aa).

Positions 1–15 (MKIIVFLAVLMLVSA) are cleaved as a signal peptide. A propeptide spanning residues 16–41 (QVCLVSAAEMEHSSDNELSSRDLVKR) is cleaved from the precursor. A disulfide bond links Cys47 and Cys53. Cys53 carries the cysteine amide modification. Residues 57–68 (DIESSEGANGGE) constitute a propeptide that is removed on maturation.

In terms of tissue distribution, expressed by the skin glands.

It localises to the secreted. The protein is Riparin-1.6 of Crinia riparia (Streambank froglet).